The sequence spans 200 residues: Small ribosomal subunit protein uS4 (200 aa).

An S4 RNA-binding domain is found at 92–155 (SRLDAVVYSL…QKLNIIVESV (64 aa)).

It belongs to the universal ribosomal protein uS4 family. Part of the 30S ribosomal subunit. Contacts protein S5. The interaction surface between S4 and S5 is involved in control of translational fidelity.

Functionally, one of the primary rRNA binding proteins, it binds directly to 16S rRNA where it nucleates assembly of the body of the 30S subunit. With S5 and S12 plays an important role in translational accuracy. This chain is Small ribosomal subunit protein uS4, found in Staphylococcus aureus (strain JH9).